The chain runs to 412 residues: Homoserine dehydrogenase (412 aa).

Residues 9–16 (LGIGTVGG) and lysine 105 contribute to the NADP(+) site. Position 190 (glutamate 190) interacts with substrate. Lysine 205 (proton donor) is an active-site residue. One can recognise an ACT domain in the interval 330–407 (YLRLRAVDKP…ISGKVTRLRM (78 aa)).

It belongs to the homoserine dehydrogenase family.

The enzyme catalyses L-homoserine + NADP(+) = L-aspartate 4-semialdehyde + NADPH + H(+). It carries out the reaction L-homoserine + NAD(+) = L-aspartate 4-semialdehyde + NADH + H(+). It participates in amino-acid biosynthesis; L-methionine biosynthesis via de novo pathway; L-homoserine from L-aspartate: step 3/3. It functions in the pathway amino-acid biosynthesis; L-threonine biosynthesis; L-threonine from L-aspartate: step 3/5. This is Homoserine dehydrogenase (hom) from Methylobacillus glycogenes.